A 142-amino-acid polypeptide reads, in one-letter code: Hemoglobin subunit alpha-A (142 aa).

The Globin domain maps to 2–142 (VLSANDKTNV…VGNVLTAKYR (141 aa)). Residue His59 participates in O2 binding. A heme b-binding site is contributed by His88.

Belongs to the globin family. As to quaternary structure, heterotetramer of two alpha chains and two beta chains. Red blood cells.

In terms of biological role, involved in oxygen transport from the lung to the various peripheral tissues. The polypeptide is Hemoglobin subunit alpha-A (HBAA) (Aegypius monachus (Cinereous vulture)).